The chain runs to 85 residues: UPF0181 protein YE1782 (85 aa).

Disordered regions lie at residues 1–22 (MLAGMPSLSHEEQQEAVERIHQ) and 57–85 (DTDFDEHDESDYRRDNEQDADEIEDPYEG). Basic and acidic residues predominate over residues 9–21 (SHEEQQEAVERIH). Positions 74–85 (QDADEIEDPYEG) are enriched in acidic residues.

This sequence belongs to the UPF0181 family.

The polypeptide is UPF0181 protein YE1782 (Yersinia enterocolitica serotype O:8 / biotype 1B (strain NCTC 13174 / 8081)).